The sequence spans 424 residues: Imidazolonepropionase (424 aa).

2 residues coordinate Fe(3+): histidine 85 and histidine 87. The Zn(2+) site is built by histidine 85 and histidine 87. The 4-imidazolone-5-propanoate site is built by arginine 94, tyrosine 157, and histidine 190. Residue tyrosine 157 coordinates N-formimidoyl-L-glutamate. Position 255 (histidine 255) interacts with Fe(3+). Histidine 255 contributes to the Zn(2+) binding site. Position 258 (glutamate 258) interacts with 4-imidazolone-5-propanoate. Aspartate 329 contacts Fe(3+). A Zn(2+)-binding site is contributed by aspartate 329. The N-formimidoyl-L-glutamate site is built by asparagine 331 and glycine 333. Serine 334 contributes to the 4-imidazolone-5-propanoate binding site.

It belongs to the metallo-dependent hydrolases superfamily. HutI family. Requires Zn(2+) as cofactor. Fe(3+) serves as cofactor.

The protein localises to the cytoplasm. It carries out the reaction 4-imidazolone-5-propanoate + H2O = N-formimidoyl-L-glutamate. Its pathway is amino-acid degradation; L-histidine degradation into L-glutamate; N-formimidoyl-L-glutamate from L-histidine: step 3/3. In terms of biological role, catalyzes the hydrolytic cleavage of the carbon-nitrogen bond in imidazolone-5-propanoate to yield N-formimidoyl-L-glutamate. It is the third step in the universal histidine degradation pathway. The polypeptide is Imidazolonepropionase (Brevibacillus brevis (strain 47 / JCM 6285 / NBRC 100599)).